Here is a 391-residue protein sequence, read N- to C-terminus: Probable acridone synthase 4 (391 aa).

C164 is a catalytic residue.

It belongs to the thiolase-like superfamily. Chalcone/stilbene synthases family.

The enzyme catalyses N-methylanthraniloyl-CoA + 3 malonyl-CoA + 3 H(+) = 1,3-dihydroxy-N-methylacridone + 3 CO2 + 4 CoA + H2O. This chain is Probable acridone synthase 4 (ACS4), found in Ruta graveolens (Common rue).